Consider the following 562-residue polypeptide: Berberine bridge enzyme-like C-1 (562 aa).

The N-terminal stretch at 1–19 (MFPLIILISFSFTFLSASA) is a signal peptide. N-linked (GlcNAc...) asparagine glycans are attached at residues asparagine 29 and asparagine 41. An intrachain disulfide couples cysteine 33 to cysteine 90. The 177-residue stretch at 68-244 (NMPKPTVIIL…YAWKIRLVKV (177 aa)) folds into the FAD-binding PCMH-type domain. Histidine 105 carries the pros-8alpha-FAD histidine modification. N-linked (GlcNAc...) asparagine glycosylation is found at asparagine 359, asparagine 498, and asparagine 558.

Belongs to the oxygen-dependent FAD-linked oxidoreductase family. FAD is required as a cofactor. As to expression, mostly expressed in roots.

The protein resides in the vacuole. It participates in alkaloid biosynthesis; nicotine biosynthesis. In terms of biological role, involved in the biosynthesis of pyridine alkaloid natural products, leading mainly to the production of anabasine, anatabine, nicotine and nornicotine, effective deterrents against herbivores with antiparasitic and pesticide properties (neurotoxins); nornicotine serves as the precursor in the synthesis of the carcinogen compound N'-nitrosonornicotine (NNN). Catalyzes a late oxidation step subsequent to the pyridine ring condensation reaction in the biosynthesis of alkaloids. The chain is Berberine bridge enzyme-like C-1 from Nicotiana tabacum (Common tobacco).